The chain runs to 428 residues: 3-phosphoshikimate 1-carboxyvinyltransferase (428 aa).

Lysine 20, serine 21, and arginine 25 together coordinate 3-phosphoshikimate. Residue lysine 20 coordinates phosphoenolpyruvate. Residues glycine 92 and arginine 120 each contribute to the phosphoenolpyruvate site. Residues serine 166, glutamine 168, aspartate 314, and lysine 341 each contribute to the 3-phosphoshikimate site. Residue glutamine 168 coordinates phosphoenolpyruvate. Aspartate 314 (proton acceptor) is an active-site residue. 2 residues coordinate phosphoenolpyruvate: arginine 345 and arginine 387.

Belongs to the EPSP synthase family. Monomer.

The protein localises to the cytoplasm. It carries out the reaction 3-phosphoshikimate + phosphoenolpyruvate = 5-O-(1-carboxyvinyl)-3-phosphoshikimate + phosphate. The protein operates within metabolic intermediate biosynthesis; chorismate biosynthesis; chorismate from D-erythrose 4-phosphate and phosphoenolpyruvate: step 6/7. Its function is as follows. Catalyzes the transfer of the enolpyruvyl moiety of phosphoenolpyruvate (PEP) to the 5-hydroxyl of shikimate-3-phosphate (S3P) to produce enolpyruvyl shikimate-3-phosphate and inorganic phosphate. The protein is 3-phosphoshikimate 1-carboxyvinyltransferase of Listeria monocytogenes serovar 1/2a (strain ATCC BAA-679 / EGD-e).